Here is a 599-residue protein sequence, read N- to C-terminus: Putative ATP-dependent helicase YeeB (599 aa).

The Helicase ATP-binding domain maps to Ala30–Asp207. An ATP-binding site is contributed by Ala43 to Ser50. The DEAH box motif lies at Asp154–His157. A Helicase C-terminal domain is found at Gln236–Ser408.

This sequence belongs to the helicase family.

The sequence is that of Putative ATP-dependent helicase YeeB (yeeB) from Bacillus subtilis (strain 168).